The following is a 457-amino-acid chain: Acetylcholine receptor subunit alpha (457 aa).

The first 20 residues, 1–20 (MEPRPLLLLLGLCSAGLVLG), serve as a signal peptide directing secretion. Over 21–230 (SEHETRLVAK…ITYHFVMQRL (210 aa)) the chain is Extracellular. 2 disulfides stabilise this stretch: Cys148–Cys162 and Cys212–Cys213. Asn161 is a glycosylation site (N-linked (GlcNAc...) asparagine). A run of 3 helical transmembrane segments spans residues 231–255 (PLYF…VFYL), 263–281 (MTLS…LVIV), and 297–316 (YMLF…VIVI). The Cytoplasmic portion of the chain corresponds to 317–428 (NTHHRSPSTH…WKYVAMVMDH (112 aa)). Residues 429-447 (ILLAVFMLVCIIGTLAVFA) form a helical membrane-spanning segment.

The protein belongs to the ligand-gated ion channel (TC 1.A.9) family. Acetylcholine receptor (TC 1.A.9.1) subfamily. Alpha-1/CHRNA1 sub-subfamily. As to quaternary structure, one of the alpha chains that assemble within the acetylcholine receptor, a pentamer of two alpha chains, a beta, a delta, and a gamma (in immature muscle) or epsilon (in mature muscle) chains. The muscle heteropentamer composed of alpha-1, beta-1, delta, epsilon subunits interacts with the alpha-conotoxin ImII.

The protein localises to the postsynaptic cell membrane. The protein resides in the cell membrane. The catalysed reaction is K(+)(in) = K(+)(out). It catalyses the reaction Na(+)(in) = Na(+)(out). In terms of biological role, upon acetylcholine binding, the AChR responds by an extensive change in conformation that affects all subunits and leads to opening of an ion-conducting channel across the plasma membrane. In Bos taurus (Bovine), this protein is Acetylcholine receptor subunit alpha (CHRNA1).